The sequence spans 483 residues: MENGEKAAETVVVGNYVEMEKDGKALDIKSKLSDMFWHGGSAYDAWFSCASNQVAQVLLTLPYSFSQLGMLSGILFQLFYGILGSWTAYLISILYVEYRTRKEREKVNFRNHVIQWFEVLDGLLGKHWRNVGLAFNCTFLLFGSVIQLIACASNIYYINDNLDKRTWTYIFGACCATTVFIPSFHNYRIWSFLGLLMTTYTAWYLTIASILHGQVEGVKHSGPSKLVLYFTGATNILYTFGGHAVTVEIMHAMWKPQKFKSIYLFATLYVLTLTLPSASAVYWAFGDLLLNHSNAFALLPKNLYRDFAVVLMLIHQFITFGFACTPLYFVWEKLIGMHECRSMCKRAAARLPVVIPIWFLAIIFPFFGPINSTVGSLLVSFTVYIIPALAHIFTFRSSAARENAVEQPPRFLGRWTGAFTINAFIVVWVFIVGFGFGGWASMINFVHQIDTFGLFTKCYQCPPPVMVSPPPISHPHFNHTHGL.

Residues Met1–Gln53 are Cytoplasmic-facing. Residues Val54–Leu71 form a helical membrane-spanning segment. At Ser72–Gly73 the chain is on the extracellular side. A helical transmembrane segment spans residues Ile74–Leu94. Topologically, residues Tyr95 to Asn130 are cytoplasmic. Residues Val131–Cys151 form a helical membrane-spanning segment. At Ala152–Thr166 the chain is on the extracellular side. Residues Trp167 to Tyr187 traverse the membrane as a helical segment. At Arg188–Trp190 the chain is on the cytoplasmic side. A helical transmembrane segment spans residues Ser191–Leu211. Residues His212 to Leu226 are Extracellular-facing. The helical transmembrane segment at Val227–Val247 threads the bilayer. Topologically, residues Glu248–Ser261 are cytoplasmic. The helical transmembrane segment at Ile262 to Tyr282 threads the bilayer. The Extracellular segment spans residues Trp283–Asp306. N-linked (GlcNAc...) asparagine glycosylation occurs at Asn291. Residues Phe307–Leu327 traverse the membrane as a helical segment. Residues Tyr328–Arg350 lie on the Cytoplasmic side of the membrane. A helical transmembrane segment spans residues Leu351–Asn371. The Extracellular portion of the chain corresponds to Ser372 to Val374. A helical transmembrane segment spans residues Gly375 to Phe395. Residues Arg396–Asn422 are Cytoplasmic-facing. A helical membrane pass occupies residues Ala423–Ile443. The Extracellular segment spans residues Asn444–Leu483. Asn478 carries N-linked (GlcNAc...) asparagine glycosylation.

Belongs to the amino acid/polyamine transporter 2 family. Amino acid/auxin permease (AAAP) (TC 2.A.18.1) subfamily.

The protein localises to the cell membrane. In terms of biological role, carrier protein involved in proton-driven auxin influx. Mediates the formation of auxin gradient from developing leaves (site of auxin biosynthesis) to tips by contributing to the loading of auxin in vascular tissues and facilitating acropetal (base to tip) auxin transport within inner tissues of the root apex, and basipetal (tip to base) auxin transport within outer tissues of the root apex. The chain is Auxin transporter-like protein 2 (LAX2) from Arabidopsis thaliana (Mouse-ear cress).